A 146-amino-acid chain; its full sequence is Transcriptional repressor NrdR (146 aa).

A zinc finger spans residues 3–34 (CPFCQNPDTKVIDTRISDDGHSIRRRRVCPKC). Residues 46–136 (LLVTKRSGGV…VYQNFAGLED (91 aa)) form the ATP-cone domain.

It belongs to the NrdR family. Requires Zn(2+) as cofactor.

In terms of biological role, negatively regulates transcription of bacterial ribonucleotide reductase nrd genes and operons by binding to NrdR-boxes. The protein is Transcriptional repressor NrdR of Bifidobacterium longum (strain NCC 2705).